We begin with the raw amino-acid sequence, 430 residues long: DNA polymerase IV 1 (430 aa).

The UmuC domain maps to 45 to 225 (LAHIDCDAFY…KPVTLIWGVG (181 aa)). Mg(2+)-binding residues include Asp-49 and Asp-142. The active site involves Glu-143.

The protein belongs to the DNA polymerase type-Y family. Monomer. Mg(2+) serves as cofactor.

Its subcellular location is the cytoplasm. The catalysed reaction is DNA(n) + a 2'-deoxyribonucleoside 5'-triphosphate = DNA(n+1) + diphosphate. In terms of biological role, poorly processive, error-prone DNA polymerase involved in untargeted mutagenesis. Copies undamaged DNA at stalled replication forks, which arise in vivo from mismatched or misaligned primer ends. These misaligned primers can be extended by PolIV. Exhibits no 3'-5' exonuclease (proofreading) activity. May be involved in translesional synthesis, in conjunction with the beta clamp from PolIII. In Rhizobium meliloti (strain 1021) (Ensifer meliloti), this protein is DNA polymerase IV 1 (dinB1).